The following is a 414-amino-acid chain: Lipoyl synthase, mitochondrial (414 aa).

Residues 1-31 constitute a mitochondrion transit peptide; the sequence is MAVSTSHFRSLCASRPLSRTAIVGHISCRSY. The tract at residues 31-51 is disordered; it reads YATTEPSPSATSTSTTTTARR. Residues 32 to 48 are compositionally biased toward low complexity; that stretch reads ATTEPSPSATSTSTTTT. [4Fe-4S] cluster contacts are provided by cysteine 131, cysteine 136, cysteine 142, cysteine 162, cysteine 166, cysteine 169, and serine 377. In terms of domain architecture, Radical SAM core spans 145-366; it reads GSDKSAATAT…RQRALDMGFL (222 aa).

It belongs to the radical SAM superfamily. Lipoyl synthase family. [4Fe-4S] cluster serves as cofactor.

Its subcellular location is the mitochondrion. It carries out the reaction [[Fe-S] cluster scaffold protein carrying a second [4Fe-4S](2+) cluster] + N(6)-octanoyl-L-lysyl-[protein] + 2 oxidized [2Fe-2S]-[ferredoxin] + 2 S-adenosyl-L-methionine + 4 H(+) = [[Fe-S] cluster scaffold protein] + N(6)-[(R)-dihydrolipoyl]-L-lysyl-[protein] + 4 Fe(3+) + 2 hydrogen sulfide + 2 5'-deoxyadenosine + 2 L-methionine + 2 reduced [2Fe-2S]-[ferredoxin]. It functions in the pathway protein modification; protein lipoylation via endogenous pathway; protein N(6)-(lipoyl)lysine from octanoyl-[acyl-carrier-protein]: step 2/2. In terms of biological role, catalyzes the radical-mediated insertion of two sulfur atoms into the C-6 and C-8 positions of the octanoyl moiety bound to the lipoyl domains of lipoate-dependent enzymes, thereby converting the octanoylated domains into lipoylated derivatives. In Aspergillus fumigatus (strain CBS 144.89 / FGSC A1163 / CEA10) (Neosartorya fumigata), this protein is Lipoyl synthase, mitochondrial.